A 116-amino-acid polypeptide reads, in one-letter code: Protein SPIRAL1-like 1 (116 aa).

Gly residues predominate over residues 1–12 (MSRGGSAGGGQS). The tract at residues 1-116 (MSRGGSAGGG…SSLGYLFGGN (116 aa)) is disordered. Residues 27–43 (AAKPAPAAAPAPAPAPA) show a composition bias toward pro residues. Residues 44–60 (PAAAVAAPAEKPSPAKA) show a composition bias toward low complexity. The span at 72 to 90 (GSRSNNNYHRADGQNTGNF) shows a compositional bias: polar residues. The span at 103–116 (PGGGSSLGYLFGGN) shows a compositional bias: gly residues.

This sequence belongs to the SPIRAL1 family.

In terms of biological role, acts in maintaining the cortical microtubules organization essential for anisotropic cell growth. The protein is Protein SPIRAL1-like 1 of Oryza sativa subsp. japonica (Rice).